Reading from the N-terminus, the 940-residue chain is Protein translocase subunit SecA 1 (940 aa).

Residues glutamine 83, 101–105 (GEGKT), and aspartate 490 each bind ATP. The tract at residues 856 to 940 (AEQGGTATAA…AKPPKSVKRR (85 aa)) is disordered.

It belongs to the SecA family. In terms of assembly, monomer and homodimer. Part of the essential Sec protein translocation apparatus which comprises SecA, SecYEG and auxiliary proteins SecDF. Other proteins may also be involved.

Its subcellular location is the cell membrane. The protein localises to the cytoplasm. It carries out the reaction ATP + H2O + cellular proteinSide 1 = ADP + phosphate + cellular proteinSide 2.. Part of the Sec protein translocase complex. Interacts with the SecYEG preprotein conducting channel. Has a central role in coupling the hydrolysis of ATP to the transfer of proteins into and across the cell membrane, serving as an ATP-driven molecular motor driving the stepwise translocation of polypeptide chains across the membrane. The chain is Protein translocase subunit SecA 1 from Mycolicibacterium paratuberculosis (strain ATCC BAA-968 / K-10) (Mycobacterium paratuberculosis).